Reading from the N-terminus, the 577-residue chain is Pentatricopeptide repeat-containing protein At1g06143 (577 aa).

PPR repeat units follow at residues 59–89, 90–124, 125–155, 158–192, 193–219, 220–250, 251–285, 286–320, 321–351, 352–386, 387–417, and 423–453; these read DCRLMNQFITACTSFKRLDLAVSTMTQMQEP, NVFVYNALFKGFVTCSHPIRSLELYVRMLRDSVSP, SSYTYSSLVKASSFASRFGESLQAHIWKFGF, HVKIQTTLIDFYSATGRIREARKVFDEMPERDDIA, WTTMVSAYRRVLDMDSANSLANQMSEK, NEATSNCLINGYMGLGNLEQAESLFNQMPVK, DIISWTTMIKGYSQNKRYREAIAVFYKMMEEGIIP, DEVTMSTVISACAHLGVLEIGKEVHMYTLQNGFVL, DVYIGSALVDMYSKCGSLERALLVFFNLPKK, NLFCWNSIIEGLAAHGFAQEALKMFAKMEMESVKP, NAVTFVSVFTACTHAGLVDEGRRIYRSMIDD, and NVEHYGGMVHLFSKAGLIYEALELIGNMEFE. Residues 458-534 are type E motif; that stretch reads IWGALLDGCR…CPGTSSIRID (77 aa). Positions 535 to 565 are type E(+) motif; that stretch reads KRDHLFAAADKSHSASDEVCLLLDEIYDQMG.

It belongs to the PPR family. PCMP-E subfamily.

The sequence is that of Pentatricopeptide repeat-containing protein At1g06143 (EMB1444) from Arabidopsis thaliana (Mouse-ear cress).